The primary structure comprises 154 residues: Ribonuclease H (154 aa).

Residues 1 to 142 (MTPKLVIYTD…ADELARLGML (142 aa)) form the RNase H type-1 domain. Mg(2+) is bound by residues Asp-10, Glu-48, Asp-70, and Asp-134.

This sequence belongs to the RNase H family. As to quaternary structure, monomer. Requires Mg(2+) as cofactor.

It is found in the cytoplasm. It catalyses the reaction Endonucleolytic cleavage to 5'-phosphomonoester.. Endonuclease that specifically degrades the RNA of RNA-DNA hybrids. The chain is Ribonuclease H from Caulobacter sp. (strain K31).